Consider the following 675-residue polypeptide: UvrABC system protein B (675 aa).

The Helicase ATP-binding domain occupies 32–417 (EGLSDGLAYQ…EHAGQVVEQV (386 aa)). 45 to 52 (GVTGSGKT) provides a ligand contact to ATP. The short motif at 98-121 (YYDYYQPEAYVPSRDLFIEKDSAI) is the Beta-hairpin element. Residues 436–602 (QVDDLMSEIN…QIKKQVKDII (167 aa)) form the Helicase C-terminal domain. The region spanning 634-669 (IKEIAKLEKAMQQAARDLQFEEAAVLRDRIRNIKEN) is the UVR domain.

This sequence belongs to the UvrB family. As to quaternary structure, forms a heterotetramer with UvrA during the search for lesions. Interacts with UvrC in an incision complex.

The protein resides in the cytoplasm. Functionally, the UvrABC repair system catalyzes the recognition and processing of DNA lesions. A damage recognition complex composed of 2 UvrA and 2 UvrB subunits scans DNA for abnormalities. Upon binding of the UvrA(2)B(2) complex to a putative damaged site, the DNA wraps around one UvrB monomer. DNA wrap is dependent on ATP binding by UvrB and probably causes local melting of the DNA helix, facilitating insertion of UvrB beta-hairpin between the DNA strands. Then UvrB probes one DNA strand for the presence of a lesion. If a lesion is found the UvrA subunits dissociate and the UvrB-DNA preincision complex is formed. This complex is subsequently bound by UvrC and the second UvrB is released. If no lesion is found, the DNA wraps around the other UvrB subunit that will check the other stand for damage. In Neisseria meningitidis serogroup A / serotype 4A (strain DSM 15465 / Z2491), this protein is UvrABC system protein B.